The chain runs to 105 residues: Integration host factor (105 aa).

The H2TH motif, binds DNA signature appears at 64–71; it reads LPKVGKVK. The interval 82-94 is lid, binds DNA; it reads APTRRLRGLGDRQ.

The protein belongs to the actinobacterial IHF (aIHF) family. As to quaternary structure, homodimer in solution. Binds DNA as a monomer.

It is found in the cytoplasm. In terms of biological role, a nucleoid-associated protein (NAP) required for septum formation and normal cell division as well as for DNA segregation. Binds about 135 sites across the chromosome, most of which are genes involved in virulence; most DNA-binding sites are immediately upstream of transcription start sites. When mIHF is depleted most of the genes are down-regulated. Binds supercoiled and linear dsDNA in a concentration-dependent manner, probably non-sequence specifically. Binding compacts DNA, protecting it from degradation. Initial binding to supercoiled DNA opens it fully, followed by bending and compaction. Bends and thus compacts linear DNA. Binds DNA via 2 sites, forms left-handed loops on linear DNA; at low concentrations unwinds larger cosmids (42.6 kb) then collapses and condenses DNA as protein levels rise. Forms mostly left-handed loops on condensing cosmid DNA. The polypeptide is Integration host factor (Mycobacterium tuberculosis (strain ATCC 25618 / H37Rv)).